Here is a 147-residue protein sequence, read N- to C-terminus: UPF0735 ACT domain-containing protein BPUM_2431 (147 aa).

The ACT domain occupies 70-145; that stretch reads TLFFHLEDRS…FVEKVEILGS (76 aa).

The protein belongs to the UPF0735 family.

This chain is UPF0735 ACT domain-containing protein BPUM_2431, found in Bacillus pumilus (strain SAFR-032).